A 351-amino-acid polypeptide reads, in one-letter code: Uroporphyrinogen decarboxylase (351 aa).

Residues R26–R30, F45, D76, Y153, S208, and H323 contribute to the substrate site.

It belongs to the uroporphyrinogen decarboxylase family. In terms of assembly, homodimer.

It localises to the cytoplasm. It carries out the reaction uroporphyrinogen III + 4 H(+) = coproporphyrinogen III + 4 CO2. The protein operates within porphyrin-containing compound metabolism; protoporphyrin-IX biosynthesis; coproporphyrinogen-III from 5-aminolevulinate: step 4/4. Its function is as follows. Catalyzes the decarboxylation of four acetate groups of uroporphyrinogen-III to yield coproporphyrinogen-III. This is Uroporphyrinogen decarboxylase from Prochlorococcus marinus (strain SARG / CCMP1375 / SS120).